Here is a 33-residue protein sequence, read N- to C-terminus: Non-specific lipid-transfer protein (33 aa).

A disulfide bridge connects residues Cys-14 and Cys-29.

This sequence belongs to the plant LTP family. Dimer.

Functionally, plant non-specific lipid-transfer proteins transfer phospholipids as well as galactolipids across membranes. May play a role in wax or cutin deposition in the cell walls of expanding epidermal cells and certain secretory tissues. Has antibacterial activity against Gram-positive bacteria S.aureus and S.epidermidis and blocks biofilm formation. In a mouse model, also protects against bacterial sepsis and has an anti-inflammatory effect. Exhibits antinociceptive activity upon oral or intraperitoneal application in mice. In Morinda citrifolia (Indian mulberry), this protein is Non-specific lipid-transfer protein.